A 1061-amino-acid polypeptide reads, in one-letter code: NACHT, LRR and PYD domains-containing protein 12 (1061 aa).

A Pyrin domain is found at 1 to 95; it reads MLRTAGRDGL…WERGQREDLV (95 aa). One can recognise an FISNA domain in the interval 129–201; sequence YRDYVRRKFR…SPIKIETLFE (73 aa). Positions 211–528 constitute an NACHT domain; the sequence is RTVVMQGAAG…EFFAAMYYIL (318 aa). Residue 217–224 participates in ATP binding; sequence GAAGIGKS. LRR repeat units lie at residues 828 to 848, 857 to 878, 885 to 906, 914 to 935, 942 to 962, 971 to 992, 999 to 1020, and 1028 to 1049; these read HLVELDLTGNALEDLGLRLLC, RLRTLWLKICRLTAAACDELAS, SLRELDLSLNELGDLGVLLLCE, KLQTLRLGICRLGSAACEGLSV, NLRELDLSFNDLGDWGLWLLA, RLQKLWLDSCGLTAKACENLYF, TLTDLYLTNNALGDTGVRLLCK, and KLRVLWLFGMDLNKMTHSRLAA.

It belongs to the NLRP family. As to quaternary structure, interacts (via pyrin domain) with ASC. Interacts (via pyrin domain) with FAF1 (via UBA domain). Interacts with MAP3K14; this interaction promotes proteasomal degradation of MAP3K14. Interacts with NOD2; this interaction promotes degradation of NOD2 through the ubiquitin-proteasome pathway. Interacts with HSPA1A and HSPA8. Interacts with HSP90AA1. Interacts with TRIM25; this interaction inhibits RIGI-mediated signaling pathway. Detected only in peripheral blood leukocytes, predominantly in eosinophils and granulocytes, and at lower levels in monocytes.

It localises to the cytoplasm. In terms of biological role, plays an essential role as an potent mitigator of inflammation. Primarily expressed in dendritic cells and macrophages, inhibits both canonical and non-canonical NF-kappa-B and ERK activation pathways. Functions as a negative regulator of NOD2 by targeting it to degradation via the proteasome pathway. In turn, promotes bacterial tolerance. Also inhibits the RIGI-mediated immune signaling against RNA viruses by reducing the E3 ubiquitin ligase TRIM25-mediated 'Lys-63'-linked RIGI activation but enhancing the E3 ubiquitin ligase RNF125-mediated 'Lys-48'-linked RIGI degradation. Also acts as a negative regulator of inflammatory response to mitigate obesity and obesity-associated diseases in adipose tissue. The protein is NACHT, LRR and PYD domains-containing protein 12 (NLRP12) of Homo sapiens (Human).